The following is a 268-amino-acid chain: UPF0294 protein ETA_26410 (268 aa).

This sequence belongs to the UPF0294 family.

It localises to the cytoplasm. The protein is UPF0294 protein ETA_26410 of Erwinia tasmaniensis (strain DSM 17950 / CFBP 7177 / CIP 109463 / NCPPB 4357 / Et1/99).